Reading from the N-terminus, the 215-residue chain is Osmoprotectant import permease protein OsmW (215 aa).

The region spanning 18–202 (TFQHLWLVAL…LLAIVLDWLL (185 aa)) is the ABC transmembrane type-1 domain. 6 consecutive transmembrane segments (helical) span residues 24–44 (LVAL…VLIV), 51–73 (TPVL…GLMI), 78–100 (LIGH…LLPI), 132–152 (WVEI…AVVM), 153–173 (NIGV…LLLL), and 183–203 (MLIA…WLLH).

Belongs to the binding-protein-dependent transport system permease family. In terms of assembly, the complex is composed of two ATP-binding proteins (OsmV), two transmembrane proteins (OsmW and OsmY) and a solute-binding protein (OsmX).

Its subcellular location is the cell inner membrane. Part of the OsmU ABC transporter complex, which is involved in the uptake of osmoprotectants such as choline-O-sulfate and glycine betaine. Probably responsible for the translocation of the substrate across the membrane. The chain is Osmoprotectant import permease protein OsmW (osmW) from Salmonella typhimurium (strain LT2 / SGSC1412 / ATCC 700720).